We begin with the raw amino-acid sequence, 547 residues long: Chaperonin GroEL (547 aa).

ATP is bound by residues 30–33 (TLGP), Lys51, 87–91 (DGTTT), Gly415, 479–481 (NAA), and Asp495. The interval 525-547 (PKEDKPDLGGGNPGGAGGMGGMM) is disordered. Residues 532–547 (LGGGNPGGAGGMGGMM) show a composition bias toward gly residues.

It belongs to the chaperonin (HSP60) family. Forms a cylinder of 14 subunits composed of two heptameric rings stacked back-to-back. Interacts with the co-chaperonin GroES.

It is found in the cytoplasm. The enzyme catalyses ATP + H2O + a folded polypeptide = ADP + phosphate + an unfolded polypeptide.. Its function is as follows. Together with its co-chaperonin GroES, plays an essential role in assisting protein folding. The GroEL-GroES system forms a nano-cage that allows encapsulation of the non-native substrate proteins and provides a physical environment optimized to promote and accelerate protein folding. In Blochmanniella floridana, this protein is Chaperonin GroEL.